Reading from the N-terminus, the 391-residue chain is PPE family protein PPE15 (391 aa).

The tract at residues 312–367 is eukaryotic-like SH3 domain; that stretch reads LGEATLVGRLSVPAAWSTAAPATTAGATALEGSGWTVAAEEAGPVTGMMPGMASAA.

It belongs to the mycobacterial PPE family. Forms a heterodimer with PE8. The dimer forms a 1:1:1 heterotrimeric complex with EspG5. PPE15 interacts directly with EspG5. Interacts via the C-terminal region with host Toll-like receptor 4 (TLR4). Interacts, also via the C-terminal region, with two cytosolic subunits of the host NOX complex, p47phox (NCF1) and p67phox (NCF2).

It is found in the secreted. It localises to the host mitochondrion. May play a critical role in the homeostasis of triacylglycerol-containing lipid droplets in M.tuberculosis and influence the entry of the pathogen into a dormant state. Is recognized by host TLR4 receptor at the macrophage cell surface, which modulates the host immune response, induces mitochondrial stress and perturbations, and induces macrophage apoptosis leading to pathogen persistence. Also downregulates NOX-mediated reactive oxygen species (ROS) generation in THP1 macrophages, which increases intracellular survival of bacteria. PPE15 interacts with two subunits of the host NADPH oxidase (NOX) complex in the cytosol of macrophages and prevents their migration to the membrane, which inhibits the assembly of the NOX complex at the plasma membrane of THP1 macrophages. This leads to reduced NOX activity and diminished ROS generation. The polypeptide is PPE family protein PPE15 (PPE15) (Mycobacterium tuberculosis (strain CDC 1551 / Oshkosh)).